An 850-amino-acid polypeptide reads, in one-letter code: cAMP-inducible prespore protein D7 (850 aa).

Positions 1-24 (MYSKKYTSFVIVLILSCIISTCTS) are cleaved as a signal peptide. Low complexity predominate over residues 119–130 (QNNNIGSSIGDS). Disordered regions lie at residues 119-167 (QNNN…SKTT) and 787-850 (DAEL…QNQK). Polar residues predominate over residues 131 to 143 (TGASTSPQFQSIN). Residues 144–154 (GLSGASQSSGS) show a composition bias toward low complexity. Positions 787–798 (DAELAKNNKQEN) are enriched in basic and acidic residues. Residues 801–820 (ENLVQEKQQSPDQIKNQLKN) are compositionally biased toward polar residues. Residues 837–850 (EKNQQLLEQEQNQK) show a composition bias toward low complexity.

In Dictyostelium discoideum (Social amoeba), this protein is cAMP-inducible prespore protein D7 (D7).